The following is a 644-amino-acid chain: Kininogen-1 (644 aa).

An N-terminal signal peptide occupies residues 1–18; sequence MKLITILFLCSRLLLSLT. At Gln-19 the chain carries Pyrrolidone carboxylic acid; in mature form. The Cystatin kininogen-type 1 domain occupies 28–132; the sequence is CNDKDLFKAV…TQTCQITPAE (105 aa). 9 disulfides stabilise this stretch: Cys-28-Cys-614, Cys-83-Cys-94, Cys-107-Cys-126, Cys-142-Cys-145, Cys-206-Cys-218, Cys-229-Cys-248, Cys-264-Cys-267, Cys-328-Cys-340, and Cys-351-Cys-370. N-linked (GlcNAc...) (complex) asparagine glycosylation occurs at Asn-48. An O-glycosylated at one site only region spans residues 120 to 153; that stretch reads SVATQTCQITPAEGPVVTAQYDCLGCVHPISTQS. A Cystatin kininogen-type 2 domain is found at 151–254; it reads TQSPDLEPIL…SQNCDIYPGK (104 aa). N-linked (GlcNAc...) asparagine glycosylation occurs at Asn-169. Asn-205 carries N-linked (GlcNAc...) (complex) asparagine glycosylation. The Cystatin kininogen-type 3 domain maps to 273 to 376; sequence TNSPELEETL…TVNCQPLGMI (104 aa). Asn-294 is a glycosylation site (N-linked (GlcNAc...) (complex) asparagine). The residue at position 332 (Ser-332) is a Phosphoserine; by FAM20C. Pro-383 is modified (4-hydroxyproline; partial). The disordered stretch occupies residues 387 to 555; that stretch reads PFRSSRIGEI…TPIPSLAKPG (169 aa). Thr-401 carries an O-linked (GalNAc...) threonine glycan. Positions 418-434 are enriched in basic and acidic residues; the sequence is DSGKEQGHTRRHDWGHE. Repeats lie at residues 420-449, 450-479, and 480-510; these read GKEQ…KHER, DQGH…KFKL, and DDDL…KNKG. Residues 435–446 are compositionally biased toward basic residues; that stretch reads KQRKHNLGHGHK. Positions 477–493 are enriched in basic and acidic residues; that stretch reads FKLDDDLEHQGGHVLDH. Basic residues predominate over residues 494–518; that stretch reads GHKHKHGHGHGKHKNKGKKNGKHNG. A compositionally biased stretch (polar residues) spans 524–539; that stretch reads LASSSEDSTTPSAQTQ. O-linked (GalNAc...) threonine glycans are attached at residues Thr-533, Thr-542, Thr-546, Thr-557, and Thr-571. A glycan (O-linked (GalNAc...) serine) is linked at Ser-577. O-linked (GalNAc...) threonine glycosylation is present at Thr-628.

Interacts (high molecular weight kininogen) (via amino acids 402-532) with triafestin-1 and triafestin-2, anticoagulant proteins from Triatoma infestans. Interacts (high molecular weight kininogen) (via amino acids 402-532) with short form salivary protein D7R1, an anticoagulant protein from Anopheles stephensi. Interacts (high molecular weight kininogen) (via amino acids 421-466 and 459-513) with haemaphysalin, an anticoagulant protein from Haemaphysalis longicornis. Bradykinin is inactivated by ACE, which removes the dipeptide Arg-Phe from its C-terminus. Post-translationally, bradykinin is released from kininogen by plasma kallikrein. In terms of processing, hydroxylation of Pro-383 occurs prior to the release of bradykinin. Phosphorylated by FAM20C in the extracellular medium. Post-translationally, N- and O-glycosylated. O-glycosylated with core 1 or possibly core 8 glycans. In terms of processing, (Microbial infection) Bradykinin is generated upon proteolytic cleavage by S.pyogenes SpeB to produce hypotension during septic shock. Secreted in plasma. T-kinin is detected in malignant ovarian, colon and breast carcinomas, but not in benign tumors.

The protein resides in the secreted. It is found in the extracellular space. Its function is as follows. Kininogens are inhibitors of thiol proteases. HMW-kininogen plays an important role in blood coagulation by helping to position optimally prekallikrein and factor XI next to factor XII; HMW-kininogen inhibits the thrombin- and plasmin-induced aggregation of thrombocytes. LMW-kininogen inhibits the aggregation of thrombocytes. LMW-kininogen is in contrast to HMW-kininogen not involved in blood clotting. The active peptide bradykinin is a potent vasodilatator that is released from HMW-kininogen shows a variety of physiological effects: (A) influence in smooth muscle contraction, (B) induction of hypotension, (C) natriuresis and diuresis, (D) decrease in blood glucose level, (E) it is a mediator of inflammation and causes (E1) increase in vascular permeability, (E2) stimulation of nociceptors (4E3) release of other mediators of inflammation (e.g. prostaglandins), (F) it has a cardioprotective effect (directly via bradykinin action, indirectly via endothelium-derived relaxing factor action). In Homo sapiens (Human), this protein is Kininogen-1 (KNG1).